A 108-amino-acid polypeptide reads, in one-letter code: Tetrahydromethanopterin S-methyltransferase subunit B (108 aa).

A helical transmembrane segment spans residues 80 to 100 (AFYGIVVGLAFSGLLALIIFI).

This sequence belongs to the MtrB family. The complex is composed of 8 subunits; MtrA, MtrB, MtrC, MtrD, MtrE, MtrF, MtrG and MtrH.

The protein resides in the cell membrane. The catalysed reaction is 5-methyl-5,6,7,8-tetrahydromethanopterin + coenzyme M + 2 Na(+)(in) = 5,6,7,8-tetrahydromethanopterin + methyl-coenzyme M + 2 Na(+)(out). Its pathway is one-carbon metabolism; methanogenesis from CO(2); methyl-coenzyme M from 5,10-methylene-5,6,7,8-tetrahydromethanopterin: step 2/2. In terms of biological role, part of a complex that catalyzes the formation of methyl-coenzyme M and tetrahydromethanopterin from coenzyme M and methyl-tetrahydromethanopterin. This is an energy-conserving, sodium-ion translocating step. The polypeptide is Tetrahydromethanopterin S-methyltransferase subunit B (Methanosarcina acetivorans (strain ATCC 35395 / DSM 2834 / JCM 12185 / C2A)).